The chain runs to 31 residues: Jingzhaotoxin F7-15.33 (31 aa).

Disulfide bonds link Cys2–Cys16, Cys9–Cys21, and Cys15–Cys28.

It belongs to the neurotoxin 10 (Hwtx-1) family. Expressed by the venom gland.

It localises to the secreted. Its function is as follows. Probable ion channel inhibitor. The chain is Jingzhaotoxin F7-15.33 from Chilobrachys guangxiensis (Chinese earth tiger tarantula).